We begin with the raw amino-acid sequence, 189 residues long: Elongation factor P (189 aa).

The protein belongs to the elongation factor P family.

The protein localises to the cytoplasm. The protein operates within protein biosynthesis; polypeptide chain elongation. In terms of biological role, involved in peptide bond synthesis. Stimulates efficient translation and peptide-bond synthesis on native or reconstituted 70S ribosomes in vitro. Probably functions indirectly by altering the affinity of the ribosome for aminoacyl-tRNA, thus increasing their reactivity as acceptors for peptidyl transferase. This Rhizobium radiobacter (Agrobacterium tumefaciens) protein is Elongation factor P.